Consider the following 94-residue polypeptide: MEEVPRRQPGGLVEAEGVFQVYEDWECWDYVSQRVPDERLQRWLAMLTNNQLRRQVIREAQIWMWKHKGAAVRRNCGCRLCNPGWGSQVRNVEL.

Its subcellular location is the virion. It localises to the host nucleus. Seems to function as a Vpr-like protein, since it mediates host cell cycle arrest in G2 phase. Cell cycle arrest creates a favorable environment for maximizing viral expression and production. The chain is Probable Vpr-like protein (tat) from Maedi visna virus (strain 1514 / clone LV1-1KS2) (MVV).